Here is a 41-residue protein sequence, read N- to C-terminus: Large ribosomal subunit protein bL36 (41 aa).

The protein belongs to the bacterial ribosomal protein bL36 family.

The protein is Large ribosomal subunit protein bL36 of Mesorhizobium japonicum (strain LMG 29417 / CECT 9101 / MAFF 303099) (Mesorhizobium loti (strain MAFF 303099)).